Consider the following 746-residue polypeptide: NAD(P)H-quinone oxidoreductase subunit 5, chloroplastic (746 aa).

Transmembrane regions (helical) follow at residues 9 to 29, 40 to 60, 88 to 108, 125 to 145, 147 to 167, 185 to 205, 225 to 245, 258 to 278, 283 to 303, 327 to 347, 354 to 374, 396 to 416, 425 to 445, 554 to 574, 610 to 630, and 726 to 746; these read YIILFLPLPVTMSIGFGLLFV, WAFVSVLLLSMVMGFSVNLAI, LIDPLTSIMSLLISTVGIMVL, FAYMSFFNTSMLGLVTSSNLI, IHIFWELVGMCSYLLIGFWFT, GDFGLLLGILGFYWITGSLEF, FAILCACLLFLGAVAKSAQFP, TPISALIHAATMVAAGIFLVA, LFIVIPYIMNLISLIGIITLL, LGYIMLALGIGSYRAALFHLI, ALLFLGSGSIIHSMEPVVGYS, TTFLLGTLSLCGIPPLACFWS, WLYSPIFAIIAYFTAGLTAFY, LFPLLVLVLFTLVVGLIGIPF, IFSVSVSLFGLFIASIFYGSV, and YLFLYLSYVSIFLIFYQYFDF.

This sequence belongs to the complex I subunit 5 family. In terms of assembly, NDH is composed of at least 16 different subunits, 5 of which are encoded in the nucleus.

The protein localises to the plastid. Its subcellular location is the chloroplast thylakoid membrane. The catalysed reaction is a plastoquinone + NADH + (n+1) H(+)(in) = a plastoquinol + NAD(+) + n H(+)(out). The enzyme catalyses a plastoquinone + NADPH + (n+1) H(+)(in) = a plastoquinol + NADP(+) + n H(+)(out). Functionally, NDH shuttles electrons from NAD(P)H:plastoquinone, via FMN and iron-sulfur (Fe-S) centers, to quinones in the photosynthetic chain and possibly in a chloroplast respiratory chain. The immediate electron acceptor for the enzyme in this species is believed to be plastoquinone. Couples the redox reaction to proton translocation, and thus conserves the redox energy in a proton gradient. This chain is NAD(P)H-quinone oxidoreductase subunit 5, chloroplastic (ndhF), found in Dioscorea elephantipes (Elephant's foot yam).